We begin with the raw amino-acid sequence, 93 residues long: UPF0147 protein MJ1419 (93 aa).

Belongs to the UPF0147 family.

In Methanocaldococcus jannaschii (strain ATCC 43067 / DSM 2661 / JAL-1 / JCM 10045 / NBRC 100440) (Methanococcus jannaschii), this protein is UPF0147 protein MJ1419.